A 102-amino-acid chain; its full sequence is Glutaredoxin (102 aa).

Residues M3–V102 form the Glutaredoxin domain. Cysteines 23 and 26 form a disulfide.

It belongs to the glutaredoxin family. CPYC subfamily.

The protein localises to the cytoplasm. Functionally, has a glutathione-disulfide oxidoreductase activity in the presence of NADPH and glutathione reductase. Reduces low molecular weight disulfides and proteins. The chain is Glutaredoxin from Ricinus communis (Castor bean).